The following is a 283-amino-acid chain: Thymidylate synthase (283 aa).

A dUMP-binding site is contributed by Arg-22. The active-site Nucleophile is the Cys-160. Residues 180–183 (RSCD), Asn-191, and 221–223 (HIY) each bind dUMP. (6R)-5,10-methylene-5,6,7,8-tetrahydrofolate is bound at residue Asp-183. Ser-282 contributes to the (6R)-5,10-methylene-5,6,7,8-tetrahydrofolate binding site.

The protein belongs to the thymidylate synthase family. Bacterial-type ThyA subfamily. In terms of assembly, homodimer.

It localises to the cytoplasm. It catalyses the reaction dUMP + (6R)-5,10-methylene-5,6,7,8-tetrahydrofolate = 7,8-dihydrofolate + dTMP. It participates in pyrimidine metabolism; dTTP biosynthesis. Functionally, catalyzes the reductive methylation of 2'-deoxyuridine-5'-monophosphate (dUMP) to 2'-deoxythymidine-5'-monophosphate (dTMP) while utilizing 5,10-methylenetetrahydrofolate (mTHF) as the methyl donor and reductant in the reaction, yielding dihydrofolate (DHF) as a by-product. This enzymatic reaction provides an intracellular de novo source of dTMP, an essential precursor for DNA biosynthesis. The sequence is that of Thymidylate synthase from Mannheimia succiniciproducens (strain KCTC 0769BP / MBEL55E).